The primary structure comprises 639 residues: tRNA 5-methylaminomethyl-2-thiouridine biosynthesis bifunctional protein MnmC (639 aa).

A tRNA (mnm(5)s(2)U34)-methyltransferase region spans residues 1 to 228 (MSEPIEWLED…KRDNLQATYA (228 aa)). Residues 254–639 (VGAGLAGAAV…SERWLGYEPQ (386 aa)) are FAD-dependent cmnm(5)s(2)U34 oxidoreductase.

This sequence in the N-terminal section; belongs to the methyltransferase superfamily. tRNA (mnm(5)s(2)U34)-methyltransferase family. It in the C-terminal section; belongs to the DAO family. It depends on FAD as a cofactor.

It localises to the cytoplasm. The catalysed reaction is 5-aminomethyl-2-thiouridine(34) in tRNA + S-adenosyl-L-methionine = 5-methylaminomethyl-2-thiouridine(34) in tRNA + S-adenosyl-L-homocysteine + H(+). Functionally, catalyzes the last two steps in the biosynthesis of 5-methylaminomethyl-2-thiouridine (mnm(5)s(2)U) at the wobble position (U34) in tRNA. Catalyzes the FAD-dependent demodification of cmnm(5)s(2)U34 to nm(5)s(2)U34, followed by the transfer of a methyl group from S-adenosyl-L-methionine to nm(5)s(2)U34, to form mnm(5)s(2)U34. This chain is tRNA 5-methylaminomethyl-2-thiouridine biosynthesis bifunctional protein MnmC, found in Acidovorax sp. (strain JS42).